The sequence spans 451 residues: Plasmepsin III (451 aa).

Over 1-37 (MNLTIKEEDFTNTFMKNEESFNTFRVTKVKRWNAKRL) the chain is Cytoplasmic. Positions 1-123 (MNLTIKEEDF…KGLTKKSYLG (123 aa)) are excised as a propeptide. A helical; Signal-anchor for type II membrane protein transmembrane segment spans residues 38–58 (FKILFVTVFIVLAGGFSYYIF). Residues 59–451 (ENFVFQKNRK…TVGFALAKNL (393 aa)) lie on the Lumenal side of the membrane. A Peptidase A1 domain is found at 139 to 446 (SFGEAKLGDN…DYDNHTVGFA (308 aa)). 2 disulfides stabilise this stretch: Cys-170-Cys-175 and Cys-372-Cys-408.

The protein belongs to the peptidase A1 family. As to quaternary structure, probable homodimer; in the zymogen form. Monomer; in the active form. Acidification disrupts homodimerization. Component of the hemozoin formation complex (HFC) composed of falcipains FP2A and/or FP2B, plasmepsins PMII, PMIII/HAP and PMIV, heme detoxifying protein HDP and falcilysin FLN. The HFC complex is involved in hemoglobin degradation and detoxification of heme in the food vacuole during the asexual blood stage. Post-translationally, proteolytically cleaved into the soluble active mature form by cysteine proteases in the digestive vacuole of trophozoites. Proteolysis requires an acidic environment. Transprocessing may serve as an alternate activation system.

Its subcellular location is the membrane. It is found in the vacuole lumen. The catalysed reaction is Hydrolysis of the bonds linking certain hydrophobic residues in hemoglobin or globin. Also cleaves small molecules substrates such as Ala-Leu-Glu-Arg-Thr-Phe-|-Phe(NO2)-Ser-Phe-Pro-Thr.. Its activity is regulated as follows. Dimerization causes loss of catalytic activity. Inhibited by pepstatin A. Inhibited by Zn(2+). Its function is as follows. During the asexual blood stage, catalyzes the cleavage of denatured host hemoglobin (Hb) or globins. Digestion of host Hb is an essential step which provides the parasite with amino acids for protein synthesis, and regulates osmolarity. This is Plasmepsin III from Plasmodium falciparum (isolate 3D7).